We begin with the raw amino-acid sequence, 115 residues long: Cysteine-rich venom protein 5 (115 aa).

Residues 1 to 22 (MSKVMIIMLVGMIFAIISTVSG) form the signal peptide. 3 disulfide bridges follow: C26–C41, C33–C44, and C40–C51. The segment at 54 to 115 (RIGPPINTQP…RKPTNRPRSH (62 aa)) is disordered. Composition is skewed to basic residues over residues 68 to 77 (QPTRRTRGPK) and 86 to 115 (NRTR…PRSH).

As to expression, expressed by the venom gland.

The protein resides in the secreted. The polypeptide is Cysteine-rich venom protein 5 (Pimpla hypochondriaca (Parasitoid wasp)).